A 755-amino-acid chain; its full sequence is 1,4-alpha-glucan branching enzyme GlgB (755 aa).

Aspartate 431 acts as the Nucleophile in catalysis. The active-site Proton donor is glutamate 484.

It belongs to the glycosyl hydrolase 13 family. GlgB subfamily. In terms of assembly, monomer.

It catalyses the reaction Transfers a segment of a (1-&gt;4)-alpha-D-glucan chain to a primary hydroxy group in a similar glucan chain.. Its pathway is glycan biosynthesis; glycogen biosynthesis. In terms of biological role, catalyzes the formation of the alpha-1,6-glucosidic linkages in glycogen by scission of a 1,4-alpha-linked oligosaccharide from growing alpha-1,4-glucan chains and the subsequent attachment of the oligosaccharide to the alpha-1,6 position. The polypeptide is 1,4-alpha-glucan branching enzyme GlgB (Prochlorococcus marinus (strain NATL2A)).